Here is a 392-residue protein sequence, read N- to C-terminus: Galactokinase (392 aa).

37 to 40 provides a ligand contact to substrate; the sequence is EHTD. Residues Ser71 and 128–134 each bind ATP; that span reads GSGLSSS. Mg(2+) is bound by residues Ser134 and Glu166. Asp178 serves as the catalytic Proton acceptor. Residue Tyr228 coordinates substrate.

It belongs to the GHMP kinase family. GalK subfamily.

The protein localises to the cytoplasm. It catalyses the reaction alpha-D-galactose + ATP = alpha-D-galactose 1-phosphate + ADP + H(+). Its pathway is carbohydrate metabolism; galactose metabolism. Its function is as follows. Catalyzes the transfer of the gamma-phosphate of ATP to D-galactose to form alpha-D-galactose-1-phosphate (Gal-1-P). In Streptococcus pneumoniae (strain ATCC BAA-255 / R6), this protein is Galactokinase.